The following is a 370-amino-acid chain: ATP synthase gamma chain, chloroplastic (370 aa).

Residues 1 to 54 (MRSFCIAALLAVASAFTTQPTSFTVKTANVGERASGVFPEQSSAHRTRKATIVM) constitute a chloroplast transit peptide. Cys-145 is an active-site residue.

It belongs to the ATPase gamma chain family. In terms of assembly, F-type ATPases have 2 components, CF(1) - the catalytic core - and CF(0) - the membrane proton channel. CF(1) has five subunits: alpha(3), beta(3), gamma(1), delta(1), epsilon(1). CF(0) has four main subunits: a, b, b' and c.

The protein resides in the plastid. It is found in the chloroplast thylakoid membrane. Produces ATP from ADP in the presence of a proton gradient across the membrane. The gamma chain is believed to be important in regulating ATPase activity and the flow of protons through the CF(0) complex. The sequence is that of ATP synthase gamma chain, chloroplastic (ATPC) from Phaeodactylum tricornutum (Diatom).